Here is a 259-residue protein sequence, read N- to C-terminus: Ribonuclease PH (259 aa).

Phosphate-binding positions include Arg-88 and 126-128 (GTR).

Belongs to the RNase PH family. As to quaternary structure, homohexameric ring arranged as a trimer of dimers.

The enzyme catalyses tRNA(n+1) + phosphate = tRNA(n) + a ribonucleoside 5'-diphosphate. Its function is as follows. Phosphorolytic 3'-5' exoribonuclease that plays an important role in tRNA 3'-end maturation. Removes nucleotide residues following the 3'-CCA terminus of tRNAs; can also add nucleotides to the ends of RNA molecules by using nucleoside diphosphates as substrates, but this may not be physiologically important. Probably plays a role in initiation of 16S rRNA degradation (leading to ribosome degradation) during starvation. The protein is Ribonuclease PH of Mycobacterium ulcerans (strain Agy99).